Consider the following 547-residue polypeptide: ATP synthase subunit alpha (547 aa).

An ATP-binding site is contributed by 172 to 179; the sequence is GDRKTGKT.

This sequence belongs to the ATPase alpha/beta chains family. In terms of assembly, F-type ATPases have 2 components, CF(1) - the catalytic core - and CF(0) - the membrane proton channel. CF(1) has five subunits: alpha(3), beta(3), gamma(1), delta(1), epsilon(1). CF(0) has three main subunits: a(1), b(2) and c(9-12). The alpha and beta chains form an alternating ring which encloses part of the gamma chain. CF(1) is attached to CF(0) by a central stalk formed by the gamma and epsilon chains, while a peripheral stalk is formed by the delta and b chains.

It is found in the cell membrane. It carries out the reaction ATP + H2O + 4 H(+)(in) = ADP + phosphate + 5 H(+)(out). Produces ATP from ADP in the presence of a proton gradient across the membrane. The alpha chain is a regulatory subunit. This chain is ATP synthase subunit alpha, found in Rhodococcus jostii (strain RHA1).